A 499-amino-acid polypeptide reads, in one-letter code: Pyruvate kinase 1 (499 aa).

A substrate-binding site is contributed by Arg50. 4 residues coordinate K(+): Asn52, Ser54, Asp84, and Thr85. 52 to 55 (NFSH) contributes to the ATP binding site. Residue Arg91 coordinates ATP. Glu241 lines the Mg(2+) pocket. 3 residues coordinate substrate: Gly264, Asp265, and Thr297. Residue Asp265 coordinates Mg(2+).

This sequence belongs to the pyruvate kinase family. In terms of assembly, homotetramer. Requires Mg(2+) as cofactor. It depends on K(+) as a cofactor.

It carries out the reaction pyruvate + ATP = phosphoenolpyruvate + ADP + H(+). It functions in the pathway carbohydrate degradation; glycolysis; pyruvate from D-glyceraldehyde 3-phosphate: step 5/5. Activated by fructose 2,6-bisphosphate, activated by the effector in a cooperative manner. The chain is Pyruvate kinase 1 (PYK1) from Trypanosoma brucei brucei.